The chain runs to 373 residues: 5-amino-6-(5-phospho-D-ribitylamino)uracil phosphatase, chloroplastic (373 aa).

Belongs to the HAD-like hydrolase superfamily. DOG/GPP family. Homodimer. Requires Mg(2+) as cofactor.

It localises to the plastid. The protein resides in the chloroplast. It catalyses the reaction 5-amino-6-(5-phospho-D-ribitylamino)uracil + H2O = 5-amino-6-(D-ribitylamino)uracil + phosphate. Functionally, catalyzes the dephosphorylation of 5-amino-6-(5-phospho-D-ribitylamino)uracil, also known as ARPP, but has no activity toward flavin mononucleotide (FMN). The protein is 5-amino-6-(5-phospho-D-ribitylamino)uracil phosphatase, chloroplastic of Arabidopsis thaliana (Mouse-ear cress).